We begin with the raw amino-acid sequence, 279 residues long: Undecaprenyl-diphosphatase (279 aa).

A run of 8 helical transmembrane segments spans residues 17–37 (TEFL…FFPF), 46–66 (AFED…VVVL), 92–112 (FQFY…GFLL), 123–143 (SDLL…MVFV), 156–176 (IGFK…IPGV), 197–217 (AEFS…YKLY), 226–246 (ETIG…YFII), and 257–277 (SFIS…LYFV).

The protein belongs to the UppP family.

Its subcellular location is the cell inner membrane. The enzyme catalyses di-trans,octa-cis-undecaprenyl diphosphate + H2O = di-trans,octa-cis-undecaprenyl phosphate + phosphate + H(+). Catalyzes the dephosphorylation of undecaprenyl diphosphate (UPP). Confers resistance to bacitracin. The chain is Undecaprenyl-diphosphatase from Leptospira biflexa serovar Patoc (strain Patoc 1 / ATCC 23582 / Paris).